A 79-amino-acid polypeptide reads, in one-letter code: Acyl carrier protein (79 aa).

A Carrier domain is found at S2–T77. S37 carries the O-(pantetheine 4'-phosphoryl)serine modification.

The protein belongs to the acyl carrier protein (ACP) family. 4'-phosphopantetheine is transferred from CoA to a specific serine of apo-ACP by AcpS. This modification is essential for activity because fatty acids are bound in thioester linkage to the sulfhydryl of the prosthetic group.

It is found in the cytoplasm. It participates in lipid metabolism; fatty acid biosynthesis. Its function is as follows. Carrier of the growing fatty acid chain in fatty acid biosynthesis. This is Acyl carrier protein from Methylocella silvestris (strain DSM 15510 / CIP 108128 / LMG 27833 / NCIMB 13906 / BL2).